A 1773-amino-acid chain; its full sequence is ATP-binding cassette sub-family A member 17 (1773 aa).

The next 3 membrane-spanning stretches (helical) occupy residues 22-42 (TLVT…VLYL), 262-282 (FPLL…NSIL), and 306-326 (AWFI…TVLF). An N-linked (GlcNAc...) asparagine glycan is attached at N340. Transmembrane regions (helical) follow at residues 342 to 362 (TLIF…AFMM), 372 to 392 (GTVI…YITF), 403 to 423 (ILSC…ISLF), and 444 to 464 (FTQV…VAFL). Residues 525-758 (IEIQHLYKVF…YGAGYYMTII (234 aa)) form the ABC transporter 1 domain. 561 to 568 (GHNGAGKT) contributes to the ATP binding site. N615 carries N-linked (GlcNAc...) asparagine glycosylation. The next 7 membrane-spanning stretches (helical) occupy residues 912 to 932 (LVLS…LSFF), 1088 to 1108 (LVVN…ILTV), 1134 to 1154 (LLWD…VFFW), 1166 to 1186 (IPAV…LVYT), 1198 to 1218 (CVKL…LVTV), 1236 to 1256 (IFLI…YYNF), and 1293 to 1313 (IGKY…LLFL). N-linked (GlcNAc...) asparagine glycosylation occurs at N1340. One can recognise an ABC transporter 2 domain in the interval 1369–1602 (LVVKELSKVY…FGSGYSLQAK (234 aa)). Residue 1404–1411 (GLNGAGKT) participates in ATP binding. Residues 1690–1773 (NIQQGQAALD…SQPPSEPVLL (84 aa)) are disordered. Positions 1700–1710 (SSLSPSNSRPI) are enriched in low complexity. 2 stretches are compositionally biased toward pro residues: residues 1711–1740 (SSPP…PSRP) and 1763–1773 (PSQPPSEPVLL).

This sequence belongs to the ABC transporter superfamily. ABCA family. Post-translationally, N-glycosylated.

The protein localises to the endoplasmic reticulum membrane. It localises to the cytoplasm. It carries out the reaction cholesterol(in) + ATP + H2O = cholesterol(out) + ADP + phosphate + H(+). Promotes cholesterol efflux from sperm which renders sperm capable of fertilization. Has also been shown to decrease levels of intracellular esterified neutral lipids including cholesteryl esters, fatty acid esters and triacylglycerols. This chain is ATP-binding cassette sub-family A member 17, found in Rattus norvegicus (Rat).